We begin with the raw amino-acid sequence, 215 residues long: Cytochrome b6 (215 aa).

A helical membrane pass occupies residues 32–52 (IFHCLGGITLTCFLVQVATGF). Heme c is bound at residue cysteine 35. Heme b contacts are provided by histidine 86 and histidine 100. Helical transmembrane passes span 90-110 (ASMM…TGGF), 116-136 (LTWV…VTGY), and 186-206 (LHTF…FSMI). Heme b is bound by residues histidine 187 and histidine 202.

This sequence belongs to the cytochrome b family. PetB subfamily. As to quaternary structure, the 4 large subunits of the cytochrome b6-f complex are cytochrome b6, subunit IV (17 kDa polypeptide, PetD), cytochrome f and the Rieske protein, while the 4 small subunits are PetG, PetL, PetM and PetN. The complex functions as a dimer. Requires heme b as cofactor. The cofactor is heme c.

Its subcellular location is the plastid. The protein localises to the chloroplast thylakoid membrane. In terms of biological role, component of the cytochrome b6-f complex, which mediates electron transfer between photosystem II (PSII) and photosystem I (PSI), cyclic electron flow around PSI, and state transitions. The polypeptide is Cytochrome b6 (Nymphaea alba (White water-lily)).